The sequence spans 296 residues: MEQFRNIGIIGRLGSVQVLDTVRRLKRFLLDRHLHVILEETIAEVLPGHGLQTSSRKMLGEVCDMVIVVGGDGSLLGAARALARHNVPVLGINRGSLGFLTDIRPDELEVKCAEVLDGHYLVENRFLLQAEVRRHGEAIGQGDALNDVVLHPGKSTRMIEFEIYIDGQFVCSQKADGLIVATPTGSTAYALSAGGPIMHPKLDAIVIVPMYPHTLSGRPIVVDGNSELKIVVSKDMTIYPQVSCDGQNHFTCAPGDTITVSKKPQKLRLIHPLDHNYYEVCRTKLGWGSKLGGGGD.

Asp72 (proton acceptor) is an active-site residue. NAD(+)-binding positions include 72-73 (DG), 146-147 (ND), Arg157, Lys174, Asp176, 187-192 (TAYALS), and Gln247.

The protein belongs to the NAD kinase family. A divalent metal cation is required as a cofactor.

The protein resides in the cytoplasm. The enzyme catalyses NAD(+) + ATP = ADP + NADP(+) + H(+). Involved in the regulation of the intracellular balance of NAD and NADP, and is a key enzyme in the biosynthesis of NADP. Catalyzes specifically the phosphorylation on 2'-hydroxyl of the adenosine moiety of NAD to yield NADP. The chain is NAD kinase from Pseudomonas savastanoi pv. phaseolicola (strain 1448A / Race 6) (Pseudomonas syringae pv. phaseolicola (strain 1448A / Race 6)).